The primary structure comprises 157 residues: Nicotinate dehydrogenase small FeS subunit (157 aa).

Residues 4–80 form the 2Fe-2S ferredoxin-type domain; it reads ITINLNLNGE…ESTIITLEGV (77 aa). Positions 42, 47, 50, 62, 101, 104, 136, and 138 each coordinate [2Fe-2S] cluster.

In terms of assembly, heterooctamer of NDHM, NDHL, NDHS and NDHF. Dimer of heterotetramers. Requires [2Fe-2S] cluster as cofactor.

The catalysed reaction is nicotinate + NADP(+) + H2O = 6-hydroxynicotinate + NADPH + H(+). It functions in the pathway cofactor degradation; nicotinate degradation; 6-hydroxynicotinate from nicotinate: step 1/1. Reversibly inactivated by selenide and sulfide. Not inhibited by cyanide. In terms of biological role, catalyzes the hydroxylation of nicotinate to 6-hydroxynicotinate. Also active against 2-pyrazinecarboxylic acid, but inactive against other nicotinate analogs. The chain is Nicotinate dehydrogenase small FeS subunit (ndhS) from Eubacterium barkeri (Clostridium barkeri).